The following is a 201-amino-acid chain: Probable nicotinate-nucleotide adenylyltransferase (201 aa).

The protein belongs to the NadD family.

It carries out the reaction nicotinate beta-D-ribonucleotide + ATP + H(+) = deamido-NAD(+) + diphosphate. The protein operates within cofactor biosynthesis; NAD(+) biosynthesis; deamido-NAD(+) from nicotinate D-ribonucleotide: step 1/1. Its function is as follows. Catalyzes the reversible adenylation of nicotinate mononucleotide (NaMN) to nicotinic acid adenine dinucleotide (NaAD). The protein is Probable nicotinate-nucleotide adenylyltransferase of Clostridium botulinum (strain Kyoto / Type A2).